We begin with the raw amino-acid sequence, 82 residues long: Large ribosomal subunit protein uL24c (82 aa).

It belongs to the universal ribosomal protein uL24 family. In terms of assembly, part of the 50S ribosomal subunit.

It is found in the plastid. The protein resides in the chloroplast. Functionally, one of two assembly initiator proteins, it binds directly to the 5'-end of the 23S rRNA, where it nucleates assembly of the 50S subunit. The chain is Large ribosomal subunit protein uL24c (rpl24) from Phaeodactylum tricornutum (strain CCAP 1055/1).